The chain runs to 131 residues: Large ribosomal subunit protein uL18 (131 aa).

Belongs to the universal ribosomal protein uL18 family. Part of the 50S ribosomal subunit; part of the 5S rRNA/L5/L18/L25 subcomplex. Contacts the 5S and 23S rRNAs.

Functionally, this is one of the proteins that bind and probably mediate the attachment of the 5S RNA into the large ribosomal subunit, where it forms part of the central protuberance. This is Large ribosomal subunit protein uL18 from Corynebacterium kroppenstedtii (strain DSM 44385 / JCM 11950 / CIP 105744 / CCUG 35717).